We begin with the raw amino-acid sequence, 226 residues long: Ribose-5-phosphate isomerase A (226 aa).

Substrate-binding positions include 25–28 (TGST), 81–84 (DGAD), and 94–97 (KGGG). Residue E103 is the Proton acceptor of the active site. Residue K121 coordinates substrate.

The protein belongs to the ribose 5-phosphate isomerase family. In terms of assembly, homodimer.

It catalyses the reaction aldehydo-D-ribose 5-phosphate = D-ribulose 5-phosphate. It functions in the pathway carbohydrate degradation; pentose phosphate pathway; D-ribose 5-phosphate from D-ribulose 5-phosphate (non-oxidative stage): step 1/1. Catalyzes the reversible conversion of ribose-5-phosphate to ribulose 5-phosphate. The polypeptide is Ribose-5-phosphate isomerase A (Enterococcus faecalis (strain ATCC 700802 / V583)).